We begin with the raw amino-acid sequence, 457 residues long: MKTNKNKTNIKMIGFYHFFYFVKPYYLLINENVIIFKAKGDFMIQKPRGTQDLFLNNSKEWNAVEEKFRKVLNLFNYGEIITPMFESKELFVRGVGDSSDIVSKEMYEFTDRKGREYVLRPEGTAPTVRALIENKLYIQENLPYKTFYIGPIFRYERPQAGRYRQFNQLGVETFGIDSISHDVELISLGQSFLKELKINKDVIVEMNYLISGNERKEYELELKKYLNLFDDLCSDCEIRINKNVLRVLDCKIDGNKFAEAPKMTLFASQENKERLNKTFDQLKQLGIEAKINFNLVRGLDYYTGLVFEFKNIKTDQAIIAGGSYNNLVEELGGPNLPASGFAIGIERIMMILSDQEIKVADEDELDLFIIPLSDDAQFLTNKLLLEARTANLKVDTNWNIKNLKAGFKSAERLKSKNIVIIGENSINSDIYAIKDQKSGETKELKFKDIVKYLKGEK.

Belongs to the class-II aminoacyl-tRNA synthetase family. In terms of assembly, homodimer.

The protein localises to the cytoplasm. It carries out the reaction tRNA(His) + L-histidine + ATP = L-histidyl-tRNA(His) + AMP + diphosphate + H(+). The protein is Histidine--tRNA ligase of Mesoplasma florum (strain ATCC 33453 / NBRC 100688 / NCTC 11704 / L1) (Acholeplasma florum).